The sequence spans 503 residues: GMP synthase [glutamine-hydrolyzing] (503 aa).

In terms of domain architecture, Glutamine amidotransferase type-1 spans 1-189 (MVLVLDFGSQ…FLELAGAKRD (189 aa)). Cys78 functions as the Nucleophile in the catalytic mechanism. Catalysis depends on residues His164 and Glu166. The 189-residue stretch at 190–378 (WTPEHVLEEL…LGLPDTLRLR (189 aa)) folds into the GMPS ATP-PPase domain. 217–223 (SGGVDSS) provides a ligand contact to ATP.

Homodimer.

The catalysed reaction is XMP + L-glutamine + ATP + H2O = GMP + L-glutamate + AMP + diphosphate + 2 H(+). It participates in purine metabolism; GMP biosynthesis; GMP from XMP (L-Gln route): step 1/1. Functionally, catalyzes the synthesis of GMP from XMP. The chain is GMP synthase [glutamine-hydrolyzing] from Thermus thermophilus (strain ATCC BAA-163 / DSM 7039 / HB27).